Here is a 482-residue protein sequence, read N- to C-terminus: Proline--tRNA ligase (482 aa).

Belongs to the class-II aminoacyl-tRNA synthetase family. ProS type 3 subfamily. In terms of assembly, homodimer.

It localises to the cytoplasm. It carries out the reaction tRNA(Pro) + L-proline + ATP = L-prolyl-tRNA(Pro) + AMP + diphosphate. Its function is as follows. Catalyzes the attachment of proline to tRNA(Pro) in a two-step reaction: proline is first activated by ATP to form Pro-AMP and then transferred to the acceptor end of tRNA(Pro). The protein is Proline--tRNA ligase of Thermofilum pendens (strain DSM 2475 / Hrk 5).